Here is a 122-residue protein sequence, read N- to C-terminus: Small ribosomal subunit protein uS13 (122 aa).

The interval arginine 99 to lysine 122 is disordered.

Belongs to the universal ribosomal protein uS13 family. Part of the 30S ribosomal subunit. Forms a loose heterodimer with protein S19. Forms two bridges to the 50S subunit in the 70S ribosome.

Located at the top of the head of the 30S subunit, it contacts several helices of the 16S rRNA. In the 70S ribosome it contacts the 23S rRNA (bridge B1a) and protein L5 of the 50S subunit (bridge B1b), connecting the 2 subunits; these bridges are implicated in subunit movement. Contacts the tRNAs in the A and P-sites. In Cereibacter sphaeroides (strain ATCC 17029 / ATH 2.4.9) (Rhodobacter sphaeroides), this protein is Small ribosomal subunit protein uS13.